We begin with the raw amino-acid sequence, 282 residues long: Putative 4-diphosphocytidyl-2-C-methyl-D-erythritol kinase (282 aa).

Residue Lys9 is part of the active site. Position 93 to 103 (93 to 103) interacts with ATP; the sequence is PVSAGLAGGSA. Residue Asp135 is part of the active site.

This sequence belongs to the GHMP kinase family. IspE subfamily.

The enzyme catalyses 4-CDP-2-C-methyl-D-erythritol + ATP = 4-CDP-2-C-methyl-D-erythritol 2-phosphate + ADP + H(+). Its function is as follows. Catalyzes the phosphorylation of the position 2 hydroxy group of 4-diphosphocytidyl-2C-methyl-D-erythritol. The protein is Putative 4-diphosphocytidyl-2-C-methyl-D-erythritol kinase of Staphylococcus haemolyticus (strain JCSC1435).